Reading from the N-terminus, the 454-residue chain is Histidine--tRNA ligase (454 aa).

Belongs to the class-II aminoacyl-tRNA synthetase family. Homodimer.

The protein localises to the cytoplasm. It carries out the reaction tRNA(His) + L-histidine + ATP = L-histidyl-tRNA(His) + AMP + diphosphate + H(+). The chain is Histidine--tRNA ligase from Bacteroides fragilis (strain YCH46).